We begin with the raw amino-acid sequence, 325 residues long: uncharacterized protein (325 aa).

Residues 1–69 (MAMMTTTTTT…KNRRVSVTVS (69 aa)) constitute a chloroplast transit peptide. Ala70 carries the N-acetylalanine modification.

Belongs to the NAD(P)-dependent epimerase/dehydratase family.

The protein localises to the plastid. Its subcellular location is the chloroplast. This is an uncharacterized protein from Arabidopsis thaliana (Mouse-ear cress).